The primary structure comprises 222 residues: GTP cyclohydrolase 1 (222 aa).

Zn(2+) is bound by residues C111, H114, and C182.

Belongs to the GTP cyclohydrolase I family. As to quaternary structure, toroid-shaped homodecamer, composed of two pentamers of five dimers.

It catalyses the reaction GTP + H2O = 7,8-dihydroneopterin 3'-triphosphate + formate + H(+). Its pathway is cofactor biosynthesis; 7,8-dihydroneopterin triphosphate biosynthesis; 7,8-dihydroneopterin triphosphate from GTP: step 1/1. This is GTP cyclohydrolase 1 from Klebsiella pneumoniae subsp. pneumoniae (strain ATCC 700721 / MGH 78578).